A 682-amino-acid polypeptide reads, in one-letter code: Transcription factor 12 (682 aa).

The 9aaTAD signature appears at 19–27 (DLLDFSAMF). Disordered regions lie at residues 25–122 (AMFS…LYSR), 140–219 (LGSP…PPTS), and 281–313 (SVSP…ASHT). Polar residues-rich tracts occupy residues 30-48 (PVNS…QFSG) and 56-76 (GTTS…SRGF). S47, S67, and S79 each carry phosphoserine. Positions 81 to 93 (HYSDHLNDSRLGA) are enriched in basic and acidic residues. A Phosphoserine modification is found at S98. Polar residues-rich tracts occupy residues 101–121 (PFMN…SLYS) and 144–163 (AQLS…SATS). A Glycyl lysine isopeptide (Lys-Gly) (interchain with G-Cter in SUMO2) cross-link involves residue K110. S116 carries the phosphoserine modification. The leucine-zipper stretch occupies residues 119–140 (LYSRDTGLPGCQSSLLRQDLGL). K181 participates in a covalent cross-link: Glycyl lysine isopeptide (Lys-Gly) (interchain with G-Cter in SUMO2). The tract at residues 182-196 (KVRKVPPGLPSSVYA) is interaction with RUNX1T1. Residues 282–306 (VSPTDINTSLPPMSSFHRGSTSSSP) are compositionally biased toward polar residues. At T313 the chain carries Phosphothreonine. The residue at position 333 (S333) is a Phosphoserine. Disordered regions lie at residues 349-395 (PDHT…SLHS) and 462-580 (SASM…ERRM). Low complexity predominate over residues 352-363 (TSSSFPSNPSTP). 2 stretches are compositionally biased toward polar residues: residues 364 to 376 (VGSP…TSQW) and 383 to 395 (APSS…SLHS). A compositionally biased stretch (low complexity) spans 481-492 (SVLSSTVTTSST). The span at 506–517 (LQSQSGTVVTTE) shows a compositional bias: polar residues. 2 stretches are compositionally biased toward basic and acidic residues: residues 518 to 530 (IKTE…ENLH) and 536 to 551 (DDMK…DIKV). K519 is covalently cross-linked (Glycyl lysine isopeptide (Lys-Gly) (interchain with G-Cter in SUMO2)). Phosphoserine is present on S540. K550 is covalently cross-linked (Glycyl lysine isopeptide (Lys-Gly) (interchain with G-Cter in SUMO2)). A Phosphothreonine modification is found at T557. Phosphoserine occurs at positions 558 and 559. The span at 568-580 (PEQKIEREKERRM) shows a compositional bias: basic and acidic residues. The 54-residue stretch at 577–630 (ERRMANNARERLRVRDINEAFKELGRMCQLHLKSEKPQTKLLILHQAVAVILSL) folds into the bHLH domain. Glycyl lysine isopeptide (Lys-Gly) (interchain with G-Cter in SUMO2) cross-links involve residues K609 and K653. Residues 632 to 655 (QQVRERNLNPKAACLKRREEEKVS) form a class A specific domain region. The interval 651-682 (EEKVSAVSAEPPTTLPGTHPGLSETTNPMGHM) is disordered. Residues 661–672 (PPTTLPGTHPGL) are compositionally biased toward low complexity. The segment covering 673–682 (SETTNPMGHM) has biased composition (polar residues).

In terms of assembly, efficient DNA binding requires dimerization with another bHLH protein. Forms homo- or heterooligomers with myogenin, E12 and ITF2 proteins. Interacts with PTF1A. Interacts with NEUROD2. Interacts with RUNX1T1. Interacts with AML1-MTG8/ETO (via nervy homology region 2 in oligomerized form). Interacts with BHLHA9. In terms of tissue distribution, expressed in several tissues and cell types including skeletal muscle, thymus, and a B-cell line.

The protein resides in the nucleus. Transcriptional regulator. Involved in the initiation of neuronal differentiation. Activates transcription by binding to the E box (5'-CANNTG-3'). May be involved in the functional network that regulates the development of the GnRH axis. The polypeptide is Transcription factor 12 (TCF12) (Homo sapiens (Human)).